A 317-amino-acid chain; its full sequence is Mitochondrial thiamine pyrophosphate carrier 1 (317 aa).

Solcar repeat units follow at residues 12–110 (GTRR…TTQV), 120–206 (PPAL…LRPV), and 214–309 (PFGS…SLKL). The next 6 membrane-spanning stretches (helical) occupy residues 17-35 (VVLSGGIAGLVSRFCVAPL), 91-107 (LMYVCYGALQFTAYRTT), 126-146 (FVSGAVAGGLATASTYPLDLL), 181-198 (GCSAAVGQIVPYMGLFFA), 220-240 (AAAGVIASVLAKTGVFPLDLV), and 284-301 (GLTVSLIKAAPASAITMW).

The protein belongs to the mitochondrial carrier (TC 2.A.29) family.

Its subcellular location is the mitochondrion inner membrane. Mitochondrial transporter that mediates uptake of thiamine pyrophosphate (ThPP) into mitochondria. The chain is Mitochondrial thiamine pyrophosphate carrier 1 (tpc1) from Neosartorya fischeri (strain ATCC 1020 / DSM 3700 / CBS 544.65 / FGSC A1164 / JCM 1740 / NRRL 181 / WB 181) (Aspergillus fischerianus).